The following is a 394-amino-acid chain: NAD(P)H-quinone oxidoreductase subunit H 2 (394 aa).

Belongs to the complex I 49 kDa subunit family. In terms of assembly, NDH-1 can be composed of about 15 different subunits; different subcomplexes with different compositions have been identified which probably have different functions.

It is found in the cell inner membrane. The catalysed reaction is a plastoquinone + NADH + (n+1) H(+)(in) = a plastoquinol + NAD(+) + n H(+)(out). It catalyses the reaction a plastoquinone + NADPH + (n+1) H(+)(in) = a plastoquinol + NADP(+) + n H(+)(out). NDH-1 shuttles electrons from an unknown electron donor, via FMN and iron-sulfur (Fe-S) centers, to quinones in the respiratory and/or the photosynthetic chain. The immediate electron acceptor for the enzyme in this species is believed to be plastoquinone. Couples the redox reaction to proton translocation, and thus conserves the redox energy in a proton gradient. Cyanobacterial NDH-1 also plays a role in inorganic carbon-concentration. The sequence is that of NAD(P)H-quinone oxidoreductase subunit H 2 from Gloeobacter violaceus (strain ATCC 29082 / PCC 7421).